The chain runs to 446 residues: Mycosin-1 (446 aa).

The signal sequence occupies residues 1–21; that stretch reads MHRIFLITVALALLTASPASA. The tract at residues 24 to 43 is disordered; that stretch reads PPPIDPGALPPDVTGPDQPT. The Peptidase S8 domain maps to 64–387; sequence PWSNTYLGVA…AGVIDAVAAL (324 aa). Residues aspartate 90, histidine 121, and serine 332 each act as charge relay system in the active site. Residues 419-439 form a helical membrane-spanning segment; the sequence is ITAVALVAVGLTLALGLGALA.

This sequence belongs to the peptidase S8 family.

It localises to the cell membrane. Its function is as follows. May play a dual role in regulation of ESX-1 secretion and virulence. Acts as a protease that cleaves EspB. Essential for ESX-1 function, required for early replication in macrophages and full virulence in mice. This chain is Mycosin-1, found in Mycobacterium tuberculosis (strain ATCC 25618 / H37Rv).